We begin with the raw amino-acid sequence, 126 residues long: Holo-[acyl-carrier-protein] synthase (126 aa).

Residues Asp-9 and Glu-58 each contribute to the Mg(2+) site.

Belongs to the P-Pant transferase superfamily. AcpS family. It depends on Mg(2+) as a cofactor.

It localises to the cytoplasm. It catalyses the reaction apo-[ACP] + CoA = holo-[ACP] + adenosine 3',5'-bisphosphate + H(+). Its function is as follows. Transfers the 4'-phosphopantetheine moiety from coenzyme A to a Ser of acyl-carrier-protein. The protein is Holo-[acyl-carrier-protein] synthase of Escherichia coli O17:K52:H18 (strain UMN026 / ExPEC).